A 284-amino-acid chain; its full sequence is Bifunctional protein FolD (284 aa).

Residues 165–167 (GRS) and Ser-190 each bind NADP(+).

Belongs to the tetrahydrofolate dehydrogenase/cyclohydrolase family. In terms of assembly, homodimer.

It catalyses the reaction (6R)-5,10-methylene-5,6,7,8-tetrahydrofolate + NADP(+) = (6R)-5,10-methenyltetrahydrofolate + NADPH. The enzyme catalyses (6R)-5,10-methenyltetrahydrofolate + H2O = (6R)-10-formyltetrahydrofolate + H(+). It participates in one-carbon metabolism; tetrahydrofolate interconversion. Catalyzes the oxidation of 5,10-methylenetetrahydrofolate to 5,10-methenyltetrahydrofolate and then the hydrolysis of 5,10-methenyltetrahydrofolate to 10-formyltetrahydrofolate. The chain is Bifunctional protein FolD from Streptococcus mutans serotype c (strain ATCC 700610 / UA159).